Consider the following 235-residue polypeptide: MKLNISYPINGTQKCVEIDDEHRVRVFYDKRIGQEVDGEAVGDEFKGYVFKIAGGNDKQGFPMKQGVLLPTRVKLLMAKGTSCYRPRRNGERKRKSVRGAIVGPDLAVLALVIVKKGDQEIEGVTNETVPKRLGPKRANNIRKFFGLTKEDDVRDYVIRREVTKGEKTYTKAPKIQRLVTPQRLQRKRQQKALKIKNAQAQREAAAEYAQLLAKRLAERKAEVRKRRASSLKAAE.

Residues Ser229 and Ser230 each carry the phosphoserine modification.

This sequence belongs to the eukaryotic ribosomal protein eS6 family. In terms of processing, phosphorylated.

In Kluyveromyces marxianus (Yeast), this protein is Small ribosomal subunit protein eS6 (RPS6).